The primary structure comprises 291 residues: Ribosomal RNA small subunit methyltransferase H (291 aa).

S-adenosyl-L-methionine contacts are provided by residues 36–38 (GGH), Asp-55, Leu-88, Asp-102, and Gln-109. The interval 268-291 (KPTQEETKNNPRARSAKLRVAERI) is disordered.

The protein belongs to the methyltransferase superfamily. RsmH family.

The protein resides in the cytoplasm. It catalyses the reaction cytidine(1402) in 16S rRNA + S-adenosyl-L-methionine = N(4)-methylcytidine(1402) in 16S rRNA + S-adenosyl-L-homocysteine + H(+). In terms of biological role, specifically methylates the N4 position of cytidine in position 1402 (C1402) of 16S rRNA. The sequence is that of Ribosomal RNA small subunit methyltransferase H from Thermosipho melanesiensis (strain DSM 12029 / CIP 104789 / BI429).